Consider the following 923-residue polypeptide: Protocadherin gamma-B5 (923 aa).

Positions 1-30 are cleaved as a signal peptide; it reads MGSGAGELGRAERLPVLFLFLLSLFCPALC. 6 consecutive Cadherin domains span residues 31–133, 134–242, 243–343, 344–448, 449–558, and 566–671; these read EQIR…TPKF, TQNS…PPVF, NRDV…SPEV, TFHS…APVF, HQAS…APRV, and DGSA…LPDI. Over 31-687 the chain is Extracellular; the sequence is EQIRYRIPEE…SDPQAELQFY (657 aa). Asparagine 415 and asparagine 541 each carry an N-linked (GlcNAc...) asparagine glycan. A helical transmembrane segment spans residues 688 to 708; it reads LVVALALISVLFLLAVILAVA. At 709 to 923 the chain is on the cytoplasmic side; that stretch reads LRLRRSSSPA…KKKSGKKEKK (215 aa). Disordered regions lie at residues 794–832 and 893–923; these read TSHPELQAPPNTDWRFSQAQRPGTSGSQNGDDTGTWPNN and ATLTNAAGKRDGKAPAGGNGNKKKSGKKEKK. The span at 807–832 shows a compositional bias: polar residues; sequence WRFSQAQRPGTSGSQNGDDTGTWPNN. The span at 913-923 shows a compositional bias: basic residues; that stretch reads NKKKSGKKEKK.

The protein localises to the cell membrane. Functionally, potential calcium-dependent cell-adhesion protein. May be involved in the establishment and maintenance of specific neuronal connections in the brain. The sequence is that of Protocadherin gamma-B5 (PCDHGB5) from Homo sapiens (Human).